Here is a 1235-residue protein sequence, read N- to C-terminus: MEAADINDDVVHPEVRAHITNLVSALGGYSADDDGSYKLGDEALDVLRDLKKWIRFYDEKTNRMDVARCLAEANLVGGDLLQILTLWPQSETDSKYKARIALACFEVMVPLTWPIEKERAEMTINHHRHMPVLQLAQLGYKRAIINFDAIPILNTAVRVALPSMAMPIGERTPRDQAIIKLILFFLRNVAMIAPPQGVKCEGDETQVSRSATIDAFSYQDIFLTLLTLASNMGEDFRTEDVVIMEIIFHLVKRVDPSSLFVSEKQLNKAKGQELASEMRKEAAMLKSYNKTTTTRHSRFGTMIWVKRADGKMVTVSGQEALLDAKTRERKMDNSKTFRPPRRARKPEMEPKDLGPPVTLDERARQQLRSFVQDFLDSGFNPLFLHVRQSIDREALHALNQHKSQFFYLVAWFLEAERMRRKAKRDESKSTSAAGEEVNSFNLVAAVLQQEMFASMNRALDRSYSDKDWQLLTSVMRCYTQIFLTVQEMSESPNEEDQEIAENTLSRLFYEETTHDLIANIARTYKDQGFEYLDAATELVHTFLRILEGYSKQNVDLQVRSRKRARRKKKAAKAAAAVAAARAAGEEAEDVGVPEDNDADDSGDDEQHAERVTQERKFEFGKFAIRFAPQGVVDTFVAFTKFYRDLNDAQLKRAHRYFYRVAFKLELSIMLFRLDIINLFYNMVQGPEPLDKSSPMFKEWEELSKQIIRKCVKKLQERPALFTELLFSKIGSTTHFLEHGYEKPVTTTTPRPGAELEFKRATERDEQIGIAVSVLIDKQQVEHLQWLKDQLTSAMSERQAWENVDKAMAATTEGAADGEAADERSNKSAPPHITIRPDTEARRTAMFKNPHLRLLMRLVGMERLTPTLDETPDSTWILPGSHTAEAIQDTIDLINKAEFSPPTFEDGGSAEDQLRRKSAAASRRTRAAYDDDEEEIRGFLGDDDDEDFLFAPGGPTARKPDARPQKKRQRKRRREAGSGDEEDEGVSDEVLAARAKKRREKELEKIRKIKSEMYVHASDDETDDERDREFFERERKRQETKDSKFDSMLGALGLSVLSQVNGGEKSAWEAVLDDEPESDESENEGRKNAKRRKKQVASGSEEEQEEEEEEEEEEDSDEELPTKQAKSKTSKRKAAVPSKRPARRPGTAKKRAVVELSDNDEDEDEEEDAMDVDSANERTTRNEAPLPSSPGEGLGRRIDKMAMDDGDEDEDDQPVVAARQRPKARGGFIIDSSDEE.

4 disordered regions span residues 327-357 (RERK…GPPV), 584-610 (GEEA…HAER), 812-841 (EGAA…TEAR), and 897-1235 (EFSP…SDEE). The span at 585-603 (EEAEDVGVPEDNDADDSGD) shows a compositional bias: acidic residues. Positions 929 to 947 (DDDEEEIRGFLGDDDDEDF) are enriched in acidic residues. Over residues 964–973 (QKKRQRKRRR) the composition is skewed to basic residues. Residues 977–986 (SGDEEDEGVS) show a composition bias toward acidic residues. Basic and acidic residues predominate over residues 999 to 1044 (EKELEKIRKIKSEMYVHASDDETDDERDREFFERERKRQETKDSKF). Composition is skewed to acidic residues over residues 1070-1081 (VLDDEPESDESE) and 1099-1118 (SEEE…SDEE). Residues 1124-1150 (AKSKTSKRKAAVPSKRPARRPGTAKKR) show a composition bias toward basic residues. Acidic residues predominate over residues 1156–1170 (SDNDEDEDEEEDAMD). The span at 1193–1202 (LGRRIDKMAM) shows a compositional bias: basic and acidic residues. Over residues 1203 to 1212 (DDGDEDEDDQ) the composition is skewed to acidic residues.

Belongs to the timeless family. In terms of assembly, component of the fork protection complex (FPC) consisting of tof-1 and csm-3.

Its subcellular location is the nucleus. Its function is as follows. Forms a fork protection complex (FPC) with csm-3 and which is required for chromosome segregation during meiosis and DNA damage repair. FPC coordinates leading and lagging strand synthesis and moves with the replication fork. FPC stabilizes replication forks in a configuration that is recognized by replication checkpoint sensors. The chain is Topoisomerase 1-associated factor 1 (tof-1) from Neurospora crassa (strain ATCC 24698 / 74-OR23-1A / CBS 708.71 / DSM 1257 / FGSC 987).